A 506-amino-acid chain; its full sequence is Protein spinster homolog 1 (506 aa).

Positions 1–42 (MSQADADITPFFADDNEGEGPVENGVGSPLPEDEEEESPSGV) are disordered. The segment covering 21 to 30 (PVENGVGSPL) has biased composition (low complexity). 12 helical membrane passes run 52–71 (IVLC…VAGV), 87–107 (GLLQ…FGYL), 115–135 (LIMC…SFIG), 149–169 (VGVG…DLFV), 176–196 (MLSI…IVGS), 207–227 (WALR…MLVV), 266–286 (FGFT…PAFL), 310–330 (LIFG…GVQA), 344–364 (LVCA…IMFA), 373–393 (VFIF…ADIL), 408–428 (FQIV…IGVV), and 450–470 (LLCS…AVFI).

Belongs to the major facilitator superfamily. Spinster (TC 2.A.1.49) family. As to expression, expressed in yolk cells.

Its subcellular location is the lysosome membrane. The catalysed reaction is a 1-acyl-sn-glycero-3-phosphocholine(out) + H(+)(out) = a 1-acyl-sn-glycero-3-phosphocholine(in) + H(+)(in). It catalyses the reaction a 1-acyl-sn-glycero-3-phosphoethanolamine(out) + H(+)(out) = a 1-acyl-sn-glycero-3-phosphoethanolamine(in) + H(+)(in). The enzyme catalyses a 1-O-(1Z-alkenyl)-sn-glycero-3-phosphocholine(out) + H(+)(out) = a 1-O-(1Z-alkenyl)-sn-glycero-3-phosphocholine(in) + H(+)(in). It carries out the reaction a 1-O-(1Z-alkenyl)-sn-glycero-3-phosphoethanolamine(out) + H(+)(out) = a 1-O-(1Z-alkenyl)-sn-glycero-3-phosphoethanolamine(in) + H(+)(in). In terms of biological role, mediates the rate-limiting, proton-dependent, lysosomal efflux of lysophospholipids. Selective for zwitterionic headgroups such as lysophosphatidylcholine (LPC) and lysophosphatidylethanolamine (LPE). Essential player in lysosomal homeostasis. Critical for embryogenesis. Involved in the regulation of developmental senescence. The chain is Protein spinster homolog 1 (spns1) from Danio rerio (Zebrafish).